A 214-amino-acid chain; its full sequence is Ras-related protein Rab2BV (214 aa).

GTP is bound at residue Gly19 to Ser26. The Effector region signature appears at Ser41 to Phe49. GTP contacts are provided by residues Asp67–Gln71 and Asn125–Asp128. Residues Cys211 and Cys212 are each lipidated (S-geranylgeranyl cysteine).

The protein belongs to the small GTPase superfamily. Rab family.

The protein localises to the cell membrane. This is Ras-related protein Rab2BV (RAB2BV) from Beta vulgaris (Sugar beet).